The sequence spans 843 residues: Elongation factor 2 (843 aa).

One can recognise a tr-type G domain in the interval 17–344; that stretch reads HNIRNMSVIA…MMIFHLPSPH (328 aa). GTP-binding positions include 26-33 and 158-161; these read AHVDHGKS and NKMD. Histidine 700 bears the Diphthamide mark. Serine 837 is modified (phosphoserine).

This sequence belongs to the TRAFAC class translation factor GTPase superfamily. Classic translation factor GTPase family. As to quaternary structure, may interact with glutaredoxins (Grxs). Expressed in root, stem, leaves, flowers and siliques.

It is found in the cytoplasm. The enzyme catalyses GTP + H2O = GDP + phosphate + H(+). Its pathway is protein biosynthesis; polypeptide chain elongation. Its function is as follows. Catalyzes the GTP-dependent ribosomal translocation step during translation elongation. During this step, the ribosome changes from the pre-translocational (PRE) to the post-translocational (POST) state as the newly formed A-site-bound peptidyl-tRNA and P-site-bound deacylated tRNA move to the P and E sites, respectively. Catalyzes the coordinated movement of the two tRNA molecules, the mRNA and conformational changes in the ribosome. Involved in cold responses leading to freezing tolerance via the induction of cold-responsive genes. This is Elongation factor 2 from Arabidopsis thaliana (Mouse-ear cress).